Reading from the N-terminus, the 206-residue chain is Ribosomal RNA small subunit methyltransferase G (206 aa).

Residues Gly-73, Leu-78, Val-124–Glu-125, and Arg-139 each bind S-adenosyl-L-methionine.

This sequence belongs to the methyltransferase superfamily. RNA methyltransferase RsmG family.

The protein localises to the cytoplasm. The enzyme catalyses guanosine(527) in 16S rRNA + S-adenosyl-L-methionine = N(7)-methylguanosine(527) in 16S rRNA + S-adenosyl-L-homocysteine. Its function is as follows. Specifically methylates the N7 position of guanine in position 527 of 16S rRNA. This chain is Ribosomal RNA small subunit methyltransferase G, found in Yersinia pseudotuberculosis serotype O:1b (strain IP 31758).